We begin with the raw amino-acid sequence, 571 residues long: RNA polymerase sigma factor SigA (571 aa).

Residues 321–391 (MVESNLRLVI…TRAIADQART (71 aa)) form a sigma-70 factor domain-2 region. The Interaction with polymerase core subunit RpoC signature appears at 345–348 (DLIQ). The tract at residues 400–476 (ETINKVLRGA…DTAVESPAEA (77 aa)) is sigma-70 factor domain-3. Residues 489 to 542 (VLKTLTDRERFVLIHRFGLLDGRPKTLEEVGSAFNVTRERIRQIEAKALRKMRH) are sigma-70 factor domain-4. Residues 515-534 (LEEVGSAFNVTRERIRQIEA) constitute a DNA-binding region (H-T-H motif).

It belongs to the sigma-70 factor family. RpoD/SigA subfamily. As to quaternary structure, interacts transiently with the RNA polymerase catalytic core.

Its subcellular location is the cytoplasm. Functionally, sigma factors are initiation factors that promote the attachment of RNA polymerase to specific initiation sites and are then released. This sigma factor is the primary sigma factor during exponential growth. The sequence is that of RNA polymerase sigma factor SigA from Chlamydia trachomatis serovar D (strain ATCC VR-885 / DSM 19411 / UW-3/Cx).